A 142-amino-acid chain; its full sequence is Large ribosomal subunit protein uL13 (142 aa).

It belongs to the universal ribosomal protein uL13 family. Part of the 50S ribosomal subunit.

Functionally, this protein is one of the early assembly proteins of the 50S ribosomal subunit, although it is not seen to bind rRNA by itself. It is important during the early stages of 50S assembly. The polypeptide is Large ribosomal subunit protein uL13 (Polaromonas sp. (strain JS666 / ATCC BAA-500)).